A 231-amino-acid polypeptide reads, in one-letter code: Lecithin retinol acyltransferase (231 aa).

The Cytoplasmic segment spans residues 1 to 194 (MKNPMLEAAS…VKIIIRDQRS (194 aa)). One can recognise an LRAT domain in the interval 50 to 177 (VLEVSRTHFI…CRYGSRISPQ (128 aa)). Catalysis depends on residues His-60 and His-72. Catalysis depends on Cys-161, which acts as the Acyl-thioester intermediate. Residues 195-215 (SLASAVLGLASIVYTGLASYM) form a helical membrane-spanning segment. Residues 216–231 (TLPAICIPFCLWMMSG) lie on the Lumenal side of the membrane.

Belongs to the H-rev107 family. Hepatic stellate cells and endothelial cells (at protein level).

The protein localises to the endoplasmic reticulum membrane. It localises to the rough endoplasmic reticulum. Its subcellular location is the endosome. The protein resides in the multivesicular body. It is found in the cytoplasm. The protein localises to the perinuclear region. It carries out the reaction all-trans-retinol--[retinol-binding protein] + a 1,2-diacyl-sn-glycero-3-phosphocholine = apo--[retinol-binding protein] + an all-trans-retinyl ester + a 2-acyl-sn-glycero-3-phosphocholine. The enzyme catalyses 1,2-diheptanoyl-sn-glycero-3-phosphocholine + all-trans-retinol--[retinol-binding protein] = all-trans-retinyl heptanoate + 2-heptanoyl-sn-glycero-3-phosphocholine + apo--[retinol-binding protein]. The catalysed reaction is 1,2-dioctanoyl-sn-glycero-3-phosphocholine + all-trans-retinol--[retinol-binding protein] = 2-octanoyl-sn-glycero-3-phosphocholine + all-trans-retinyl octanoate + apo--[retinol-binding protein]. It catalyses the reaction all-trans-retinol--[retinol-binding protein] + 1,2-dihexadecanoyl-sn-glycero-3-phosphocholine = apo--[retinol-binding protein] + all-trans-retinyl hexadecanoate + 2-hexadecanoyl-sn-glycero-3-phosphocholine. It carries out the reaction 1,2-didodecanoyl-sn-glycero-3-phosphocholine + all-trans-retinol--[retinol-binding protein] = 2-dodecanoyl-sn-glycero-3-phosphocholine + all-trans-retinyl dodecanoate + apo--[retinol-binding protein]. The enzyme catalyses 1,2-dihexadecanoyl-sn-glycero-3-phosphocholine + all-trans-retinol = all-trans-retinyl hexadecanoate + 2-hexadecanoyl-sn-glycero-3-phosphocholine. Its pathway is cofactor metabolism; retinol metabolism. Its activity is regulated as follows. Inhibited by all-trans-retinyl alpha-bromoacetate and N-boc-L-biocytinyl-11-aminoundecane chloro-methyl ketone (BACMK). Functionally, transfers the acyl group from the sn-1 position of phosphatidylcholine to all-trans retinol, producing all-trans retinyl esters. Retinyl esters are storage forms of vitamin A. LRAT plays a critical role in vision. It provides the all-trans retinyl ester substrates for the isomerohydrolase which processes the esters into 11-cis-retinol in the retinal pigment epithelium; due to a membrane-associated alcohol dehydrogenase, 11 cis-retinol is oxidized and converted into 11-cis-retinaldehyde which is the chromophore for rhodopsin and the cone photopigments. Required for the survival of cone photoreceptors and correct rod photoreceptor cell morphology. This Mus musculus (Mouse) protein is Lecithin retinol acyltransferase (Lrat).